We begin with the raw amino-acid sequence, 633 residues long: Membrane protein insertase YidC (633 aa).

Helical transmembrane passes span 3 to 23 (KNTLIGFLLIGVVLFAFSWFN), 377 to 397 (FIHNYGILILLMTIIVKIILF), 453 to 473 (LPMLLQMPILIALFMFFPSAI), 499 to 519 (IPIITPYFGNHISLFCLLMTI), 541 to 561 (GMKAMMYMMPLMFLVFFNQYA), and 562 to 582 (SGLTYYYFISTLITIVQTLIF). A disordered region spans residues 612-633 (LEEAQRAQQETLRKQQEAKKKR).

The protein belongs to the OXA1/ALB3/YidC family. Type 1 subfamily. In terms of assembly, interacts with the Sec translocase complex via SecD. Specifically interacts with transmembrane segments of nascent integral membrane proteins during membrane integration.

It is found in the cell inner membrane. Its function is as follows. Required for the insertion and/or proper folding and/or complex formation of integral membrane proteins into the membrane. Involved in integration of membrane proteins that insert both dependently and independently of the Sec translocase complex, as well as at least some lipoproteins. Aids folding of multispanning membrane proteins. The sequence is that of Membrane protein insertase YidC from Parabacteroides distasonis (strain ATCC 8503 / DSM 20701 / CIP 104284 / JCM 5825 / NCTC 11152).